A 382-amino-acid chain; its full sequence is Mannitol-1-phosphate 5-dehydrogenase (382 aa).

Alanine 3–glycine 14 lines the NAD(+) pocket. Lysine 269 is modified (N6-acetyllysine).

This sequence belongs to the mannitol dehydrogenase family.

The catalysed reaction is D-mannitol 1-phosphate + NAD(+) = beta-D-fructose 6-phosphate + NADH + H(+). The polypeptide is Mannitol-1-phosphate 5-dehydrogenase (Escherichia coli O9:H4 (strain HS)).